The following is a 73-amino-acid chain: Large ribosomal subunit protein bL31 (73 aa).

Belongs to the bacterial ribosomal protein bL31 family. Type A subfamily. In terms of assembly, part of the 50S ribosomal subunit.

In terms of biological role, binds the 23S rRNA. The polypeptide is Large ribosomal subunit protein bL31 (Allorhizobium ampelinum (strain ATCC BAA-846 / DSM 112012 / S4) (Agrobacterium vitis (strain S4))).